The sequence spans 380 residues: Cytochrome b (380 aa).

The next 4 membrane-spanning stretches (helical) occupy residues 33–53 (FGSLLGICLMVQIITGLFLAM), 77–98 (WLIRYAHANGASMFFICLFIHV), 113–133 (WNIGIILLLTTMATAFVGYVL), and 178–198 (FFAFHFILPFIITALVLVHLL). Residues His-83 and His-97 each coordinate heme b. Residues His-182 and His-196 each contribute to the heme b site. His-201 is a binding site for a ubiquinone. 4 helical membrane passes run 226–246 (IKDILGVLLLLMVLMFLVLFF), 288–308 (LGGVLALLLSILILAAFPLLN), 320–340 (ITQTLYWIFVANLLILTWIGG), and 347–367 (FTTIGQISSIMYFMIIVIFMP).

It belongs to the cytochrome b family. In terms of assembly, the cytochrome bc1 complex contains 11 subunits: 3 respiratory subunits (MT-CYB, CYC1 and UQCRFS1), 2 core proteins (UQCRC1 and UQCRC2) and 6 low-molecular weight proteins (UQCRH/QCR6, UQCRB/QCR7, UQCRQ/QCR8, UQCR10/QCR9, UQCR11/QCR10 and a cleavage product of UQCRFS1). This cytochrome bc1 complex then forms a dimer. Requires heme b as cofactor.

The protein localises to the mitochondrion inner membrane. Its function is as follows. Component of the ubiquinol-cytochrome c reductase complex (complex III or cytochrome b-c1 complex) that is part of the mitochondrial respiratory chain. The b-c1 complex mediates electron transfer from ubiquinol to cytochrome c. Contributes to the generation of a proton gradient across the mitochondrial membrane that is then used for ATP synthesis. This Microryzomys minutus (Forest small rice rat) protein is Cytochrome b (MT-CYB).